The following is a 281-amino-acid chain: 4-deoxy-L-threo-5-hexosulose-uronate ketol-isomerase (281 aa).

The Zn(2+) site is built by histidine 198, histidine 200, glutamate 205, and histidine 248.

Belongs to the KduI family. It depends on Zn(2+) as a cofactor.

It carries out the reaction 5-dehydro-4-deoxy-D-glucuronate = 3-deoxy-D-glycero-2,5-hexodiulosonate. The protein operates within glycan metabolism; pectin degradation; 2-dehydro-3-deoxy-D-gluconate from pectin: step 4/5. Catalyzes the isomerization of 5-dehydro-4-deoxy-D-glucuronate to 3-deoxy-D-glycero-2,5-hexodiulosonate. In Lacticaseibacillus casei (strain BL23) (Lactobacillus casei), this protein is 4-deoxy-L-threo-5-hexosulose-uronate ketol-isomerase.